We begin with the raw amino-acid sequence, 223 residues long: Immediate early response gene 2 protein (223 aa).

Met-1 is subject to N-acetylmethionine. The tract at residues 63-172 is disordered; sequence AALPSDPRLH…PPAQAEGAFP (110 aa). The segment covering 69–78 has biased composition (basic and acidic residues); the sequence is PRLHPPREAE. Over residues 125–138 the composition is skewed to low complexity; it reads SSLSDGGDAGLVPS.

It belongs to the IER family. In terms of tissue distribution, expressed in activated T-cells (at protein level). Expression increases in metastatic tumor cells (at protein level).

Its subcellular location is the cytoplasm. The protein resides in the nucleus. Its function is as follows. DNA-binding protein that seems to act as a transcription factor. Involved in the regulation of neuronal differentiation, acts upon JNK-signaling pathway activation and plays a role in neurite outgrowth in hippocampal cells. May mediate with FIBP FGF-signaling in the establishment of laterality in the embryo. Promotes cell motility, seems to stimulate tumor metastasis. This chain is Immediate early response gene 2 protein, found in Homo sapiens (Human).